The chain runs to 326 residues: Protein-arginine N-acetylglucosaminyltransferase NleB2 (326 aa).

Residues 45-47 (QWF), Tyr-69, and 216-219 (YLDM) contribute to the UDP-N-acetyl-alpha-D-glucosamine site. The DXD motif motif lies at 218–220 (DMD). Asp-220 is a binding site for Mn(2+). Residue Glu-250 is the Proton acceptor of the active site. Positions 317 and 319 each coordinate Mn(2+). UDP-N-acetyl-alpha-D-glucosamine is bound by residues Ser-319 and 324–326 (SSW).

This sequence belongs to the glycosyltransferase NleB family. Mn(2+) is required as a cofactor.

The protein localises to the secreted. Its subcellular location is the host cell. It catalyses the reaction L-arginyl-[protein] + UDP-N-acetyl-alpha-D-glucosamine = N(omega)-(N-acetyl-beta-D-glucosaminyl)-L-arginyl-[protein] + UDP + H(+). Its function is as follows. Protein-arginine N-acetylglucosaminyltransferase effector that catalyzes the transfer of a single N-acetylglucosamine (GlcNAc) to a conserved arginine residue of host target proteins. In contrast to NleB1, not able to disrupt TNF signaling in infected cells. Shows a lower enzymatic activity than NleB1. This chain is Protein-arginine N-acetylglucosaminyltransferase NleB2, found in Escherichia coli O145:H28 (strain RM12581).